The following is a 403-amino-acid chain: Tryptophan synthase beta chain (403 aa).

N6-(pyridoxal phosphate)lysine is present on K96.

The protein belongs to the TrpB family. In terms of assembly, tetramer of two alpha and two beta chains. Requires pyridoxal 5'-phosphate as cofactor.

It catalyses the reaction (1S,2R)-1-C-(indol-3-yl)glycerol 3-phosphate + L-serine = D-glyceraldehyde 3-phosphate + L-tryptophan + H2O. It functions in the pathway amino-acid biosynthesis; L-tryptophan biosynthesis; L-tryptophan from chorismate: step 5/5. Its function is as follows. The beta subunit is responsible for the synthesis of L-tryptophan from indole and L-serine. The chain is Tryptophan synthase beta chain from Ralstonia nicotianae (strain ATCC BAA-1114 / GMI1000) (Ralstonia solanacearum).